A 932-amino-acid polypeptide reads, in one-letter code: Protein translocase subunit SecA (932 aa).

ATP contacts are provided by residues Gln-90, 108–112, and Asp-498; that span reads GEGKT.

The protein belongs to the SecA family. Monomer and homodimer. Part of the essential Sec protein translocation apparatus which comprises SecA, SecYEG and auxiliary proteins SecDF. Other proteins may also be involved.

It is found in the cell inner membrane. Its subcellular location is the cellular thylakoid membrane. It localises to the cytoplasm. It catalyses the reaction ATP + H2O + cellular proteinSide 1 = ADP + phosphate + cellular proteinSide 2.. Functionally, part of the Sec protein translocase complex. Interacts with the SecYEG preprotein conducting channel. Has a central role in coupling the hydrolysis of ATP to the transfer of proteins into and across the cell membrane, serving as an ATP-driven molecular motor driving the stepwise translocation of polypeptide chains across the membrane. Probably participates in protein translocation into and across both the cytoplasmic and thylakoid membranes in cyanobacterial cells. The sequence is that of Protein translocase subunit SecA from Synechocystis sp. (strain ATCC 27184 / PCC 6803 / Kazusa).